Consider the following 622-residue polypeptide: Dehydrogenase xptC (622 aa).

The N-terminal stretch at M1–A18 is a signal peptide. Residues V47–S48, E68–A69, and N123–I126 each bind FAD. Residues N160, N173, N357, N364, and N480 are each glycosylated (N-linked (GlcNAc...) asparagine). An FAD-binding site is contributed by P598–M599.

This sequence belongs to the GMC oxidoreductase family. Homodimer. FAD is required as a cofactor.

Its pathway is secondary metabolite biosynthesis. Its function is as follows. Dehydrogenase involved in the conversion of monodictyphenone to the prenyl xanthones such as emericellin, shamixanthone and epishamixanthone. Monodictyphenone is first converted to variecoxanthone A via a paeciloxanthone intermediate by the consecutive actions of the FAD-dependent monooxygenase mdpD and the xanthone prenyltransferase xptB. XptB catalyzes regular O-prenylation at the hydroxy group of C-7 of the xanthone ring. Variecoxanthone A is further prenylated to emericellin by xptA before being reduced to shamixanthone and epishamixanthone by the dehydrogenase xptC. The chain is Dehydrogenase xptC from Emericella nidulans (strain FGSC A4 / ATCC 38163 / CBS 112.46 / NRRL 194 / M139) (Aspergillus nidulans).